The chain runs to 91 residues: Small ribosomal subunit protein bS18 (91 aa).

It belongs to the bacterial ribosomal protein bS18 family. As to quaternary structure, part of the 30S ribosomal subunit. Forms a tight heterodimer with protein bS6.

In terms of biological role, binds as a heterodimer with protein bS6 to the central domain of the 16S rRNA, where it helps stabilize the platform of the 30S subunit. This chain is Small ribosomal subunit protein bS18, found in Paraburkholderia xenovorans (strain LB400).